The chain runs to 830 residues: Cadherin-16 (830 aa).

The signal sequence occupies residues 1–21 (MISARPWLLYLSVIQAFTTEA). At 22 to 788 (QPAESLHTEV…MKGMPTKLSA (767 aa)) the chain is on the extracellular side. Cadherin domains lie at 27-128 (LHTE…VPQF), 133-237 (YRAQ…SIVE), 244-338 (EPVH…APVC), 343-451 (PTVN…APEF), 457-566 (GPVT…PLKL), and 571-667 (YETS…VPAL). 3 N-linked (GlcNAc...) asparagine glycosylation sites follow: N519, N604, and N724. The tract at residues 668–788 (TLSAGPSRHL…MKGMPTKLSA (121 aa)) is ectodomain G. The helical transmembrane segment at 789 to 809 (VGVLLGTLAAIGFILILVFTH) threads the bilayer. Topologically, residues 810-830 (LALARKDLDQPADSVPLKAAV) are cytoplasmic. S823 is subject to Phosphoserine.

As to expression, kidney specific.

It localises to the cell membrane. In terms of biological role, cadherins are calcium-dependent cell adhesion proteins. They preferentially interact with themselves in a homophilic manner in connecting cells; cadherins may thus contribute to the sorting of heterogeneous cell types. This chain is Cadherin-16 (Cdh16), found in Mus musculus (Mouse).